The primary structure comprises 100 residues: Large ribosomal subunit protein bL21 (100 aa).

The protein belongs to the bacterial ribosomal protein bL21 family. As to quaternary structure, part of the 50S ribosomal subunit. Contacts protein L20.

In terms of biological role, this protein binds to 23S rRNA in the presence of protein L20. This Ureaplasma urealyticum serovar 10 (strain ATCC 33699 / Western) protein is Large ribosomal subunit protein bL21.